The chain runs to 249 residues: Uridylate kinase (249 aa).

15–18 contacts ATP; the sequence is KLSG. The involved in allosteric activation by GTP stretch occupies residues 23 to 28; the sequence is GDEGFG. Residue G57 coordinates UMP. G58 and R62 together coordinate ATP. Residues D77 and 138–145 contribute to the UMP site; that span reads TGNPFFTT. ATP contacts are provided by T165, Y171, and D174.

This sequence belongs to the UMP kinase family. In terms of assembly, homohexamer.

It localises to the cytoplasm. It carries out the reaction UMP + ATP = UDP + ADP. The protein operates within pyrimidine metabolism; CTP biosynthesis via de novo pathway; UDP from UMP (UMPK route): step 1/1. Its activity is regulated as follows. Allosterically activated by GTP. Inhibited by UTP. Catalyzes the reversible phosphorylation of UMP to UDP. This is Uridylate kinase from Pseudoalteromonas translucida (strain TAC 125).